The chain runs to 397 residues: Tryptophan synthase beta chain (397 aa).

K87 carries the N6-(pyridoxal phosphate)lysine modification.

The protein belongs to the TrpB family. In terms of assembly, tetramer of two alpha and two beta chains. Requires pyridoxal 5'-phosphate as cofactor.

It catalyses the reaction (1S,2R)-1-C-(indol-3-yl)glycerol 3-phosphate + L-serine = D-glyceraldehyde 3-phosphate + L-tryptophan + H2O. The protein operates within amino-acid biosynthesis; L-tryptophan biosynthesis; L-tryptophan from chorismate: step 5/5. In terms of biological role, the beta subunit is responsible for the synthesis of L-tryptophan from indole and L-serine. The sequence is that of Tryptophan synthase beta chain from Cronobacter sakazakii (strain ATCC BAA-894) (Enterobacter sakazakii).